The primary structure comprises 41 residues: Photosystem I reaction center subunit IX (41 aa).

A helical transmembrane segment spans residues 7 to 27 (YLSTAPVLATLWFGFLAGLLI).

This sequence belongs to the PsaJ family.

Its subcellular location is the plastid. It localises to the chloroplast thylakoid membrane. May help in the organization of the PsaE and PsaF subunits. This is Photosystem I reaction center subunit IX from Physcomitrium patens (Spreading-leaved earth moss).